A 422-amino-acid polypeptide reads, in one-letter code: Histidinol dehydrogenase (422 aa).

Tyr-123, Gln-183, and Asn-206 together coordinate NAD(+). The substrate site is built by Ser-229, Gln-251, and His-254. Gln-251 and His-254 together coordinate Zn(2+). Catalysis depends on proton acceptor residues Glu-320 and His-321. Residues His-321, Asp-354, Glu-408, and His-413 each contribute to the substrate site. Asp-354 is a Zn(2+) binding site. His-413 contributes to the Zn(2+) binding site.

The protein belongs to the histidinol dehydrogenase family. It depends on Zn(2+) as a cofactor.

It carries out the reaction L-histidinol + 2 NAD(+) + H2O = L-histidine + 2 NADH + 3 H(+). The protein operates within amino-acid biosynthesis; L-histidine biosynthesis; L-histidine from 5-phospho-alpha-D-ribose 1-diphosphate: step 9/9. In terms of biological role, catalyzes the sequential NAD-dependent oxidations of L-histidinol to L-histidinaldehyde and then to L-histidine. The chain is Histidinol dehydrogenase from Natronomonas pharaonis (strain ATCC 35678 / DSM 2160 / CIP 103997 / JCM 8858 / NBRC 14720 / NCIMB 2260 / Gabara) (Halobacterium pharaonis).